Reading from the N-terminus, the 666-residue chain is Galactocerebrosidase (666 aa).

Residues 1-22 (MIYKLYFAIALCFSLCFDLCIA) form the signal peptide. Substrate is bound at residue Thr91. N-linked (GlcNAc...) asparagine glycosylation occurs at Asn125. Residues Trp133 and Asn179 each coordinate substrate. Glu180 (proton donor/acceptor) is an active-site residue. Residue Glu256 is the Nucleophile of the active site. Cys269 and Cys376 form a disulfide bridge. N-linked (GlcNAc...) asparagine glycosylation is present at Asn361. Arg378 lines the substrate pocket. 4 N-linked (GlcNAc...) asparagine glycosylation sites follow: Asn385, Asn390, Asn500, and Asn540.

Belongs to the glycosyl hydrolase 59 family.

The protein resides in the lysosome. The enzyme catalyses a beta-D-galactosyl-(1&lt;-&gt;1')-N-acylsphing-4-enine + H2O = an N-acylsphing-4-enine + D-galactose. It carries out the reaction beta-D-galactosyl-(1&lt;-&gt;1)-sphing-4-enine + H2O = sphing-4-enine + D-galactose. It catalyses the reaction a D-galactosylceramide + H2O = an N-acyl-sphingoid base + D-galactose. Its function is as follows. Hydrolyzes the galactose ester bonds of glycolipids such as galactosylceramide and galactosylsphingosine. This is Galactocerebrosidase from Salmo salar (Atlantic salmon).